The primary structure comprises 266 residues: Translation initiation factor 2 subunit alpha (266 aa).

The region spanning 12–83 is the S1 motif domain; that stretch reads GEILIATVKQ…RKGTVDVSLK (72 aa).

The protein belongs to the eIF-2-alpha family. Heterotrimer composed of an alpha, a beta and a gamma chain.

EIF-2 functions in the early steps of protein synthesis by forming a ternary complex with GTP and initiator tRNA. The sequence is that of Translation initiation factor 2 subunit alpha from Saccharolobus islandicus (strain L.S.2.15 / Lassen #1) (Sulfolobus islandicus).